A 210-amino-acid chain; its full sequence is Probable GTP-binding protein EngB (210 aa).

One can recognise an EngB-type G domain in the interval 25–199; sequence TGIEVAFAGR…RQKLDSWFNE (175 aa). Residues 33–40, 60–64, 78–81, 145–148, and 178–180 each bind GTP; these read GRSNAGKS, GRTQL, DLPG, TKAD, and FSS. Mg(2+) contacts are provided by S40 and T62.

This sequence belongs to the TRAFAC class TrmE-Era-EngA-EngB-Septin-like GTPase superfamily. EngB GTPase family. Mg(2+) serves as cofactor.

Necessary for normal cell division and for the maintenance of normal septation. The sequence is that of Probable GTP-binding protein EngB from Klebsiella pneumoniae (strain 342).